Here is a 306-residue protein sequence, read N- to C-terminus: Metal ABC transporter substrate-binding lipoprotein SloC (306 aa).

The N-terminal stretch at 1–19 (MKKLSLLLLVCLSLLGLFA) is a signal peptide. Cys20 is lipidated: N-palmitoyl cysteine. Residue Cys20 is the site of S-diacylglycerol cysteine attachment. Residues His64, His136, Glu202, and Asp277 each coordinate a divalent metal cation.

This sequence belongs to the bacterial solute-binding protein 9 family. Lipoprotein receptor antigen (Lrai) subfamily.

The protein localises to the cell membrane. Functionally, part of the ATP-binding cassette (ABC) transport system SloABC involved in metal import. Binds a metal with high affinity and specificity and delivers it to the membrane permease for translocation into the cytoplasm. May act as an adhesin which is involved on adherence to extracellular matrix. It is an important factor in pathogenesis and infection. May contribute to the formation and accumulation of dental plaque. The chain is Metal ABC transporter substrate-binding lipoprotein SloC (sloC) from Streptococcus mutans serotype c (strain ATCC 700610 / UA159).